The chain runs to 324 residues: Glutathione synthetase (324 aa).

An ATP-grasp domain is found at 124 to 309 (KLAIAQFREF…VAGMFIDALE (186 aa)). 150 to 206 (HAEQGDVIFKPLDGMGGAGIFRVGADGMNLGSVIETLTHNGTRTVMAQQYIPAIRDG) provides a ligand contact to ATP. E280 and N282 together coordinate Mg(2+).

The protein belongs to the prokaryotic GSH synthase family. Mg(2+) serves as cofactor. The cofactor is Mn(2+).

The enzyme catalyses gamma-L-glutamyl-L-cysteine + glycine + ATP = glutathione + ADP + phosphate + H(+). Its pathway is sulfur metabolism; glutathione biosynthesis; glutathione from L-cysteine and L-glutamate: step 2/2. The polypeptide is Glutathione synthetase (Ralstonia nicotianae (strain ATCC BAA-1114 / GMI1000) (Ralstonia solanacearum)).